A 249-amino-acid chain; its full sequence is Adenylate kinase (249 aa).

ATP is bound at residue 43–48 (GAGKGT). An NMP region spans residues 63-92 (ATGDMLRAQVAAKTALGVEAKKIMDQGGLV). AMP contacts are provided by residues T64, R69, 90–92 (GLV), 119–122 (GFPR), and Q126. The interval 160 to 197 (GRLVHPASGRSYHKLFNPPKKDMTDDVTGEPLVQRSDD) is LID. ATP-binding positions include R161 and 170 to 171 (SY). Positions 177–197 (PPKKDMTDDVTGEPLVQRSDD) are disordered. Residues R194 and R205 each coordinate AMP. An ATP-binding site is contributed by Q233.

The protein belongs to the adenylate kinase family. AK2 subfamily. In terms of assembly, monomer.

The protein resides in the cytoplasm. Its subcellular location is the cytosol. It localises to the mitochondrion intermembrane space. It catalyses the reaction AMP + ATP = 2 ADP. Functionally, catalyzes the reversible transfer of the terminal phosphate group between ATP and AMP. Plays an important role in cellular energy homeostasis and in adenine nucleotide metabolism. Adenylate kinase activity is critical for regulation of the phosphate utilization and the AMP de novo biosynthesis pathways. The chain is Adenylate kinase from Candida albicans (strain SC5314 / ATCC MYA-2876) (Yeast).